The primary structure comprises 623 residues: uncharacterized protein (623 aa).

Basic and acidic residues predominate over residues 157-166 (LNESPLRDQQ). The disordered stretch occupies residues 157-237 (LNESPLRDQQ…QGLPDHNNSI (81 aa)). Over residues 167 to 177 (ESSTPSKNSTL) the composition is skewed to polar residues. Residues 193–210 (AFRPLPSPSRRSSQSAPA) are compositionally biased toward low complexity.

This is an uncharacterized protein from Macaca fascicularis (Crab-eating macaque).